Here is a 97-residue protein sequence, read N- to C-terminus: Large ribosomal subunit protein uL23 (97 aa).

This sequence belongs to the universal ribosomal protein uL23 family. In terms of assembly, part of the 50S ribosomal subunit. Contacts protein L29, and trigger factor when it is bound to the ribosome.

Functionally, one of the early assembly proteins it binds 23S rRNA. One of the proteins that surrounds the polypeptide exit tunnel on the outside of the ribosome. Forms the main docking site for trigger factor binding to the ribosome. The sequence is that of Large ribosomal subunit protein uL23 from Thermoanaerobacter pseudethanolicus (strain ATCC 33223 / 39E) (Clostridium thermohydrosulfuricum).